The chain runs to 312 residues: Malate dehydrogenase (312 aa).

Residues 7 to 13 (GAAGGIG) and aspartate 34 contribute to the NAD(+) site. The substrate site is built by arginine 81 and arginine 87. Residues asparagine 94 and 117–119 (ITN) contribute to the NAD(+) site. Asparagine 119 and arginine 153 together coordinate substrate. Histidine 177 serves as the catalytic Proton acceptor. Methionine 227 lines the NAD(+) pocket.

The protein belongs to the LDH/MDH superfamily. MDH type 1 family. Homodimer.

It carries out the reaction (S)-malate + NAD(+) = oxaloacetate + NADH + H(+). Its function is as follows. Catalyzes the reversible oxidation of malate to oxaloacetate. The sequence is that of Malate dehydrogenase from Klebsiella pneumoniae (strain 342).